We begin with the raw amino-acid sequence, 452 residues long: Mitochondrial import inner membrane translocase subunit TIM44 (452 aa).

At Thr128 the chain carries Phosphothreonine. 166-173 (SGEKLGKT) serves as a coordination point for ATP. The residue at position 177 (Lys177) is an N6-succinyllysine. The residue at position 180 (Ser180) is a Phosphoserine. Residue Lys217 is modified to N6-succinyllysine.

This sequence belongs to the Tim44 family. As to quaternary structure, probable component of the PAM complex at least composed of a mitochondrial HSP70 protein, GRPEL1 or GRPEL2, TIMM44, TIMM16/PAM16 and TIMM14/DNAJC19. The complex interacts with the TIMM23 component of the TIM23 complex. Interacts with SLC25A4/ANT1 and SLC25A5/ANT2; leading to inhibit the presequence translocase TIMM23, thereby promoting stabilization of PINK1.

It localises to the mitochondrion inner membrane. Essential component of the PAM complex, a complex required for the translocation of transit peptide-containing proteins from the inner membrane into the mitochondrial matrix in an ATP-dependent manner. Recruits mitochondrial HSP70 to drive protein translocation into the matrix using ATP as an energy source. The protein is Mitochondrial import inner membrane translocase subunit TIM44 (Timm44) of Mus musculus (Mouse).